A 471-amino-acid polypeptide reads, in one-letter code: UTP--glucose-1-phosphate uridylyltransferase (471 aa).

Residues 87-90, Lys101, Gln164, and Gly193 contribute to the UTP site; that span reads LNGG. Substrate is bound at residue 89–90; that stretch reads GG. Substrate-binding positions include His194 and 222-224; that span reads NSD. Residues Asp224 and Lys362 each coordinate UTP.

This sequence belongs to the UDPGP type 1 family.

The protein localises to the cytoplasm. The enzyme catalyses alpha-D-glucose 1-phosphate + UTP + H(+) = UDP-alpha-D-glucose + diphosphate. In terms of biological role, plays a central role as a glucosyl donor in cellular metabolic pathways. In Pyrus pyrifolia (Chinese pear), this protein is UTP--glucose-1-phosphate uridylyltransferase.